Here is a 49-residue protein sequence, read N- to C-terminus: uncharacterized protein (49 aa).

A helical transmembrane segment spans residues 6–28 (IYPLTVFYFFAIEMSVFCYYNWF).

Its subcellular location is the membrane. This is an uncharacterized protein from Saccharomyces cerevisiae (strain ATCC 204508 / S288c) (Baker's yeast).